The chain runs to 192 residues: MKRLEVSNQAKLPTQFGEFYIQCFREKGSNGSKDHLVVFTPNFSQNPLVRLHSECLTGDALGSQKCDCGGALQMALERISKEGGLVIYLRQEGRGIGLFNKVNAYALQDKGYDTIQANEMIGFKDDERDYSVAGEILEYYRIKKMRLLTNNPKKIAALEKYAEVTRESLIVCANEHNQGYLEVKKLKMGHLL.

50-54 is a binding site for GTP; that stretch reads RLHSE. Zn(2+) is bound by residues cysteine 55, cysteine 66, and cysteine 68. Residues 92–94 and threonine 114 contribute to the GTP site; that span reads EGR. Aspartate 126 acts as the Proton acceptor in catalysis. The Nucleophile role is filled by arginine 128. Residues threonine 149 and lysine 154 each contribute to the GTP site.

It belongs to the GTP cyclohydrolase II family. It depends on Zn(2+) as a cofactor.

The catalysed reaction is GTP + 4 H2O = 2,5-diamino-6-hydroxy-4-(5-phosphoribosylamino)-pyrimidine + formate + 2 phosphate + 3 H(+). It participates in cofactor biosynthesis; riboflavin biosynthesis; 5-amino-6-(D-ribitylamino)uracil from GTP: step 1/4. Its function is as follows. Catalyzes the conversion of GTP to 2,5-diamino-6-ribosylamino-4(3H)-pyrimidinone 5'-phosphate (DARP), formate and pyrophosphate. The sequence is that of GTP cyclohydrolase-2 from Helicobacter pylori (strain P12).